A 223-amino-acid chain; its full sequence is Cytotoxic T-lymphocyte protein 4 (223 aa).

Residues 1–35 (MACSGFQSHGAWLELTSRTWPCTALFSLLFIPVFS) form the signal peptide. Residues 38 to 161 (MHVAQPAVVL…IDPEPCPDSD (124 aa)) lie on the Extracellular side of the membrane. Residues 39 to 140 (HVAQPAVVLA…VELLYPPPYY (102 aa)) form the Ig-like V-type domain. A homodimerization region spans residues 46 to 50 (VLANS). Intrachain disulfides connect cysteine 58/cysteine 129 and cysteine 85/cysteine 103. Asparagine 113 carries an N-linked (GlcNAc...) asparagine glycan. The segment at 134-139 (LYPPPY) is important for interaction with CD80 and CD86. The N-linked (GlcNAc...) asparagine glycan is linked to asparagine 145. The segment at 150–155 (YVIDPE) is homodimerization. Residues 162 to 182 (FLLWILAAVSSGLFFYSFLIT) form a helical membrane-spanning segment. The Cytoplasmic portion of the chain corresponds to 183–223 (AVSLSKMLKKRSPLTTGVYVKMPPTEPECEKQFQPYFIPIN). A Phosphotyrosine; by TXK and JAK2 modification is found at tyrosine 201.

Homodimer; disulfide-linked. Binds to CD80/B7-1 and CD86/B7.2. Interacts with ICOSLG. N-glycosylation is important for dimerization. In terms of processing, phosphorylation at Tyr-201 prevents binding to the AP-2 adapter complex, blocks endocytosis, and leads to retention of CTLA4 on the cell surface.

The protein localises to the cell membrane. In terms of biological role, inhibitory receptor acting as a major negative regulator of T-cell responses. The affinity of CTLA4 for its natural B7 family ligands, CD80 and CD86, is considerably stronger than the affinity of their cognate stimulatory coreceptor CD28. The polypeptide is Cytotoxic T-lymphocyte protein 4 (CTLA4) (Sus scrofa (Pig)).